We begin with the raw amino-acid sequence, 67 residues long: Ferredoxin (67 aa).

4Fe-4S ferredoxin-type domains lie at 3–31 (WKVSVDQDTCIGDAICASLCPDVFEMNDE) and 36–67 (PKVEVIEDEELYNCAKEAMEACPVSAITIEEA). Cys12, Asp15, and Cys18 together coordinate [4Fe-4S] cluster. A disulfide bridge links Cys22 with Cys49. Cys57 contacts [4Fe-4S] cluster.

Homodimer. It depends on [4Fe-4S] cluster as a cofactor. The cofactor is [3Fe-4S] cluster.

Its function is as follows. Ferredoxins are iron-sulfur proteins that transfer electrons in a wide variety of metabolic reactions. The polypeptide is Ferredoxin (fdxA) (Pyrococcus furiosus (strain ATCC 43587 / DSM 3638 / JCM 8422 / Vc1)).